Consider the following 485-residue polypeptide: MSLFDHSVSELHKKLNNKEISVTDLVEESYKRIADVEDNVKAFLTLDEENARAKAKELDAKIGAEDNGLLFGMPIGVKDNIVTNGLRTTCASKMLANFDPIYDATVVQKLKAADTITIGKLNMDEFAMGSSNENSGFYATKNPWNLDYVPGGSSGGSAAAVAAGEVLFSLGSDTGGSIRQPAAYCGVVGLKPTYGRVSRYGLVAFASSLDQIGPITRTVEDNAYLLQAISGLDRMDATSANVEVGNYLAGLTGDVKGLRIAVPKEYLGEGVGEEARESVLAALKVLEGMGATWEEVSLPHSKYALATYYLLSSSEASANLSRFDGVRYGVRSDNVNNLMDLYKNTRSEGFGDEVKRRIMLGTFALSSGYYDAYYKKAQQVRTLIKNDFENVFANYDVIIGPTTPTPAFKVGEKVDDPMTMYANDILTIPVNLAGVPAISVPCGFGANNMPLGLQIIGKHFDEATIYRVAHAFEQATDHHTKKASL.

Catalysis depends on charge relay system residues Lys-78 and Ser-153. The active-site Acyl-ester intermediate is the Ser-177.

This sequence belongs to the amidase family. GatA subfamily. Heterotrimer of A, B and C subunits.

It catalyses the reaction L-glutamyl-tRNA(Gln) + L-glutamine + ATP + H2O = L-glutaminyl-tRNA(Gln) + L-glutamate + ADP + phosphate + H(+). In terms of biological role, allows the formation of correctly charged Gln-tRNA(Gln) through the transamidation of misacylated Glu-tRNA(Gln) in organisms which lack glutaminyl-tRNA synthetase. The reaction takes place in the presence of glutamine and ATP through an activated gamma-phospho-Glu-tRNA(Gln). This is Glutamyl-tRNA(Gln) amidotransferase subunit A from Bacillus cereus (strain ATCC 10987 / NRS 248).